The chain runs to 476 residues: Ribulose bisphosphate carboxylase large chain (476 aa).

Residues 1 to 2 (MS) constitute a propeptide that is removed on maturation. The residue at position 3 (P3) is an N-acetylproline. An N6,N6,N6-trimethyllysine modification is found at K14. Substrate is bound by residues N123 and T173. The Proton acceptor role is filled by K175. K177 provides a ligand contact to substrate. K201, D203, and E204 together coordinate Mg(2+). The residue at position 201 (K201) is an N6-carboxylysine. The active-site Proton acceptor is H294. 3 residues coordinate substrate: R295, H327, and S379.

It belongs to the RuBisCO large chain family. Type I subfamily. As to quaternary structure, heterohexadecamer of 8 large chains and 8 small chains; disulfide-linked. The disulfide link is formed within the large subunit homodimers. The cofactor is Mg(2+). The disulfide bond which can form in the large chain dimeric partners within the hexadecamer appears to be associated with oxidative stress and protein turnover.

The protein resides in the plastid. It localises to the chloroplast. It carries out the reaction 2 (2R)-3-phosphoglycerate + 2 H(+) = D-ribulose 1,5-bisphosphate + CO2 + H2O. The catalysed reaction is D-ribulose 1,5-bisphosphate + O2 = 2-phosphoglycolate + (2R)-3-phosphoglycerate + 2 H(+). Functionally, ruBisCO catalyzes two reactions: the carboxylation of D-ribulose 1,5-bisphosphate, the primary event in carbon dioxide fixation, as well as the oxidative fragmentation of the pentose substrate in the photorespiration process. Both reactions occur simultaneously and in competition at the same active site. The protein is Ribulose bisphosphate carboxylase large chain of Arenaria drummondii (Drummond sandwort).